The following is a 152-amino-acid chain: Glutaredoxin-related protein 5, mitochondrial (152 aa).

A mitochondrion-targeting transit peptide spans 1 to 31 (MSASLSRAAAALLRWGRSAGGGGLPGAGVRA). Residues 38 to 141 (AEQLDALVKK…EELKKLGIRS (104 aa)) form the Glutaredoxin domain. Lys-55 contacts glutathione. Lys-55 bears the N6-succinyllysine mark. Cys-63 contacts [2Fe-2S] cluster. Glutathione-binding positions include 93-97 (RQGIK), Ile-105, and 118-119 (CD). Ser-151 carries the post-translational modification Phosphoserine.

The protein belongs to the glutaredoxin family. Monothiol subfamily. Homodimer. Interacts with ISCU. Interacts with BOLA1. Detected in bone, liver, muscle and kidney.

The protein localises to the mitochondrion matrix. In terms of biological role, monothiol glutaredoxin involved in mitochondrial iron-sulfur (Fe/S) cluster transfer. Receives 2Fe/2S clusters from scaffold protein ISCU and mediates their transfer to apoproteins, to the 4Fe/FS cluster biosynthesis machinery, or export from mitochondrion. Required for normal regulation of hemoglobin synthesis by the iron-sulfur protein ACO1. The polypeptide is Glutaredoxin-related protein 5, mitochondrial (Glrx5) (Mus musculus (Mouse)).